The following is a 188-amino-acid chain: VQ motif-containing protein 18 (188 aa).

Disordered regions lie at residues 1–20, 58–92, and 157–188; these read MEIT…VSMN, LTGK…HQPV, and GFIF…HNSS. The VQ motif lies at 51–60; the sequence is FRSLVQSLTG. The span at 161 to 179 shows a compositional bias: low complexity; sequence NNNNNNNNNNNNNNNNNTN.

It localises to the nucleus. In terms of biological role, may function as positive regulator of plant growth. This is VQ motif-containing protein 18 from Arabidopsis thaliana (Mouse-ear cress).